We begin with the raw amino-acid sequence, 347 residues long: MDLQAQLEELKTKTLETLQSLTGNHTKELQDLRVAVLGKKGSLTELLKGLKDLSNDLRPVVGKQVNEVRDLLTKAFEEQAKIVEAAKIQAQLDAESIDVTLPGRQMTLGHRHVLTQTSEEIEDIFLGMGFQIVDGFEVEKDYYNFERMNLPKDHPARDMQDTFYITEEILLRTHTSPVQARTLDQHDFSKGPLKMVSPGRVFRRDTDDATHSHQFHQIEGLVVGKNISMGDLKGTLEMIIKKMFGEERSIRLRPSYFPFTEPSVEVDVSCFKCGGKGCNVCKKTGWIEILGAGMVHPSVLEMSGVDAKEYSGFAFGLGQERIAMLRYGINDIRGFYQGDQRFSEQFN.

Glutamate 261 lines the Mg(2+) pocket.

This sequence belongs to the class-II aminoacyl-tRNA synthetase family. Phe-tRNA synthetase alpha subunit type 1 subfamily. As to quaternary structure, tetramer of two alpha and two beta subunits. It depends on Mg(2+) as a cofactor.

It is found in the cytoplasm. It carries out the reaction tRNA(Phe) + L-phenylalanine + ATP = L-phenylalanyl-tRNA(Phe) + AMP + diphosphate + H(+). This is Phenylalanine--tRNA ligase alpha subunit from Streptococcus pyogenes serotype M3 (strain ATCC BAA-595 / MGAS315).